Here is a 320-residue protein sequence, read N- to C-terminus: Nucleotide-binding protein Psyc_0118 (320 aa).

An ATP-binding site is contributed by 32 to 39 (GRSGSGKT). 82–85 (DIRT) serves as a coordination point for GTP.

Belongs to the RapZ-like family.

Displays ATPase and GTPase activities. The chain is Nucleotide-binding protein Psyc_0118 from Psychrobacter arcticus (strain DSM 17307 / VKM B-2377 / 273-4).